A 69-amino-acid polypeptide reads, in one-letter code: MMSKLGVLLTICLLLFPLTAVPLDGDQPADRPAERMQDDISSENHPMFDAIRGCCMPLSCMLLCEPCCG.

The N-terminal stretch at M1–A20 is a signal peptide. Positions V21–R52 are excised as a propeptide. C68 is modified (cysteine amide).

The protein belongs to the conotoxin M family. In terms of processing, is not hydroxylated. Post-translationally, contains 3 disulfide bonds. Expressed by the venom duct.

The protein resides in the secreted. Its function is as follows. Mu-conotoxins block voltage-gated sodium channels (Nav). The chain is Mu-conotoxin-like Am3.3 from Conus amadis (Amadis cone).